Here is a 22-residue protein sequence, read N- to C-terminus: Probable ATP-dependent Clp protease proteolytic subunit (22 aa).

This sequence belongs to the peptidase S14 family. As to quaternary structure, component of the chloroplastic Clp protease core complex.

The catalysed reaction is Hydrolysis of proteins to small peptides in the presence of ATP and magnesium. alpha-casein is the usual test substrate. In the absence of ATP, only oligopeptides shorter than five residues are hydrolyzed (such as succinyl-Leu-Tyr-|-NHMec, and Leu-Tyr-Leu-|-Tyr-Trp, in which cleavage of the -Tyr-|-Leu- and -Tyr-|-Trp bonds also occurs).. Functionally, cleaves peptides in various proteins in a process that requires ATP hydrolysis. Has a chymotrypsin-like activity. Plays a major role in the degradation of misfolded proteins. The chain is Probable ATP-dependent Clp protease proteolytic subunit from Populus euphratica (Euphrates poplar).